The primary structure comprises 900 residues: DNA mismatch repair protein MutS (900 aa).

An ATP-binding site is contributed by 637–644; the sequence is GPNMAGKS.

The protein belongs to the DNA mismatch repair MutS family.

Functionally, this protein is involved in the repair of mismatches in DNA. It is possible that it carries out the mismatch recognition step. This protein has a weak ATPase activity. The protein is DNA mismatch repair protein MutS of Methanosarcina barkeri (strain Fusaro / DSM 804).